The following is a 225-amino-acid chain: Small ribosomal subunit protein uS3 (225 aa).

The KH type-2 domain occupies Val16–Lys85. Positions Glu202–Ser225 are disordered. Basic and acidic residues predominate over residues Thr205–Ser225.

The protein belongs to the universal ribosomal protein uS3 family. As to quaternary structure, part of the 30S ribosomal subunit.

Its function is as follows. Binds the lower part of the 30S subunit head. The protein is Small ribosomal subunit protein uS3 of Thermoplasma acidophilum (strain ATCC 25905 / DSM 1728 / JCM 9062 / NBRC 15155 / AMRC-C165).